Here is a 1389-residue protein sequence, read N- to C-terminus: DNA-directed RNA polymerase subunit beta'' (1389 aa).

Residues Cys224, Cys295, Cys302, and Cys305 each contribute to the Zn(2+) site.

It belongs to the RNA polymerase beta' chain family. RpoC2 subfamily. As to quaternary structure, in plastids the minimal PEP RNA polymerase catalytic core is composed of four subunits: alpha, beta, beta', and beta''. When a (nuclear-encoded) sigma factor is associated with the core the holoenzyme is formed, which can initiate transcription. Zn(2+) serves as cofactor.

The protein localises to the plastid. Its subcellular location is the chloroplast. It carries out the reaction RNA(n) + a ribonucleoside 5'-triphosphate = RNA(n+1) + diphosphate. Functionally, DNA-dependent RNA polymerase catalyzes the transcription of DNA into RNA using the four ribonucleoside triphosphates as substrates. The protein is DNA-directed RNA polymerase subunit beta'' of Atropa belladonna (Belladonna).